The following is an 832-amino-acid chain: Thymine dioxygenase JBP1-A (832 aa).

Over residues 1–12 (MKQKRGKQDVKM) the composition is skewed to basic and acidic residues. Positions 1–24 (MKQKRGKQDVKMLESAPPQLLPKK) are disordered. The tract at residues 80–282 (VVGGVFLPGA…RLTCVCYYRA (203 aa)) is thymine dioxygenase. 3 residues coordinate Fe cation: His-207, Asp-209, and His-257. A 2-oxoglutarate-binding site is contributed by Arg-273. The segment at 409-578 (LGGALKAAEE…IEEARRRGSS (170 aa)) is DNA-binding JBP1 domain.

This sequence belongs to the TET family. JBP1 subfamily. Monomer. Binds to DNA as a monomer. It depends on Fe(2+) as a cofactor.

It localises to the nucleus. The enzyme catalyses thymine + 2-oxoglutarate + O2 = 5-hydroxymethyluracil + succinate + CO2. Dioxygenase that catalyzes the first step of DNA base J (beta-d-glucosyl-HOMedU) biosynthesis by converting thymine to 5-hydroxymethyluracil (HOMedU). DNA base J is a hypermodified thymidine residue found in the genome of kinetoplastid parasites, which is localized primarily to repetitive DNA, namely the telomeres, and is implicated in the regulation of antigenic variation. Also specifically binds to base J-containing DNA (J-DNA). Involved in propagation and maintenance of DNA base J synthesis initiated by JBP2 by specifically binding already synthesized DNA base J and propagating J synthesis. Thymine dioxygenase activity and J-DNA-binding are independent functions. The chain is Thymine dioxygenase JBP1-A (JBP1A) from Trypanosoma cruzi (strain CL Brener).